The chain runs to 154 residues: Cytochrome c' (154 aa).

The first 23 residues, 1–23 (MKHVLASTAAGLMALGLASSAIA), serve as a signal peptide directing secretion. Residues Arg35, Gln36, Arg95, Cys144, Cys147, and His148 each contribute to the heme c site.

In terms of assembly, homodimer. Binds 1 heme c group covalently per subunit.

Its function is as follows. Cytochrome c' is the most widely occurring bacterial c-type cytochrome. Cytochromes c' are high-spin proteins and the heme has no sixth ligand. Their exact function is not known. The protein is Cytochrome c' (cycA) of Allochromatium vinosum (strain ATCC 17899 / DSM 180 / NBRC 103801 / NCIMB 10441 / D) (Chromatium vinosum).